We begin with the raw amino-acid sequence, 396 residues long: Purple acid phosphatase 5 (396 aa).

Residues 1-13 (MSLETFPPPAGYN) form the signal peptide. Residue asparagine 58 is glycosylated (N-linked (GlcNAc...) asparagine). Aspartate 125 provides a ligand contact to Fe cation. The N-linked (GlcNAc...) asparagine glycan is linked to asparagine 133. Fe cation-binding residues include aspartate 153 and tyrosine 156. Aspartate 153 contacts Zn(2+). Asparagine 190 serves as a coordination point for Zn(2+). Asparagine 190 lines the substrate pocket. A glycan (N-linked (GlcNAc...) asparagine) is linked at asparagine 238. Residue histidine 250 participates in Zn(2+) binding. Histidine 260 (proton donor) is an active-site residue. A Zn(2+)-binding site is contributed by histidine 287. 287–289 (HVH) contributes to the substrate binding site. Histidine 289 contributes to the Fe cation binding site. Asparagine 303 and asparagine 360 each carry an N-linked (GlcNAc...) asparagine glycan.

Belongs to the metallophosphoesterase superfamily. Purple acid phosphatase family. As to quaternary structure, homodimer. Requires Fe cation as cofactor. It depends on Zn(2+) as a cofactor.

Its subcellular location is the secreted. It catalyses the reaction a phosphate monoester + H2O = an alcohol + phosphate. The sequence is that of Purple acid phosphatase 5 (PAP5) from Arabidopsis thaliana (Mouse-ear cress).